Reading from the N-terminus, the 145-residue chain is Selenoprotein M (145 aa).

The signal sequence occupies residues 1–23 (MSILLSPPSLLLLLAALVAPATS). Catalysis depends on nucleophile residues C45 and U48. Residues 45–48 (CGGU) constitute a cross-link (cysteinyl-selenocysteine (Cys-Sec)). Residue U48 is a non-standard amino acid, selenocysteine. Residues 125-145 (PPEYLWAPAKPPEEASEHDDL) form a disordered region.

The protein belongs to the selenoprotein M/F family. Widely expressed. Highly expressed in brain.

It is found in the cytoplasm. The protein localises to the perinuclear region. It localises to the endoplasmic reticulum. The protein resides in the golgi apparatus. Its function is as follows. May function as a thiol-disulfide oxidoreductase that participates in disulfide bond formation. This is Selenoprotein M from Mus musculus (Mouse).